The sequence spans 473 residues: Sulfhydrylase-like protein lolC1 (473 aa).

K226 bears the N6-(pyridoxal phosphate)lysine mark.

The protein belongs to the trans-sulfuration enzymes family. The cofactor is pyridoxal 5'-phosphate.

It functions in the pathway alkaloid biosynthesis. In terms of biological role, sulfhydrylase-like protein; part of the gene cluster that mediates the biosynthesis of loline alkaloids, potent insecticidal agents composed of a pyrrolizidine ring system and an uncommon ether bridge linking carbons 2 and 7. Lolines are structurally differentiated by the various modifications of the L-amino group and include norloline, loline, N-methylloline, N-acetylloline, N-acetylnorloline, and N-formylloline. The first committed step is the condensation of O-acetyl-L-homoserine (derived from L-aspartic acid) and L-proline, probably catalyzed by the gamma-type pyridoxal 5'-phosphate(PLP)-dependent enzyme lolC, to give the diamino diacid, NACPP. Ensuing cyclization, decarboxylation, and acetylation steps yield 1-exo-acetamidopyrrolizidine (AcAP). LolO is required for installation of the ether bridge upon the pathway intermediate, 1-exo-acetamidopyrrolizidine (AcAP). In sequential 2-oxoglutarate- and O(2)-consuming steps, lolO removes hydrogens from C2 and C7 of AcAP to form both carbon-oxygen bonds in N-acetylnorloline (NANL), the precursor to all other lolines. The enzymes lolD, lolE, lolF and lolT have also been proposed to be involved in the ether-bridge installation. Further processing of the exocyclic moiety of NANL by fungal N-acetamidase (LolN), methyltransferase (LolM), and cytochrome P450 (LolP) enzymes, with occasional involvement of a plant acetyltransferase, generates the other known lolines. LolN transforms NANL to norlonine which is monomethylated and dimethylated to respectively lonine and N-methyllonine (NML) by lolM. LolP catalyzes hydroxylation of the methyl group in N-methylloline (NML) and further oxygenation to N-formylloline (NFL). A plant acetyltransferase is responsible for the acetylation of loline to form N-acetylloline (NAL). LolA might interact with aspartate kinase to prevent feedback inhibition of its activity by these end products and thereby promote production of L-homoserine from L-aspartate. The chain is Sulfhydrylase-like protein lolC1 from Epichloe uncinata (Endophyte fungus).